We begin with the raw amino-acid sequence, 173 residues long: MKTKEIVDDVTMKRAITRITYEIIERNKQLDNVVLAGIKTRGVFLARRIQERLHQLEGLDLPIGELDPKPFRDDMRVEEDTTLMSVDITGKDVILIDDVLYTGRTIRAAIDNLVSLGRPARVSLAVLVDRGHRELPIRADYVGKNIPTSSVEEIVVEVVEVDGRDRVSIIDPT.

Residues 93–105 (VILIDDVLYTGRT) carry the PRPP-binding motif.

This sequence belongs to the purine/pyrimidine phosphoribosyltransferase family. PyrR subfamily. As to quaternary structure, homodimer and homohexamer; in equilibrium.

The enzyme catalyses UMP + diphosphate = 5-phospho-alpha-D-ribose 1-diphosphate + uracil. Functionally, regulates transcriptional attenuation of the pyrimidine nucleotide (pyr) operon by binding in a uridine-dependent manner to specific sites on pyr mRNA. This disrupts an antiterminator hairpin in the RNA and favors formation of a downstream transcription terminator, leading to a reduced expression of downstream genes. Its function is as follows. Also displays a weak uracil phosphoribosyltransferase activity which is not physiologically significant. This chain is Bifunctional protein PyrR, found in Streptococcus pyogenes serotype M49 (strain NZ131).